Here is a 313-residue protein sequence, read N- to C-terminus: MSSLRTHDDTWDIKSSVGTTAVMVAAARAVETEQPDPLIRDPYAKLLVTNSGAGVLWEAMLDPDIAARVEALDEESAAHLHHMRGYQAVRTHFFDTYFADAVAAGIRQIVILASGLDSRAYRLDWPAGTTVYEIDQPQVLAYKSTTLAENGVTPSADRREVAVDLRQDWPAALRAAGFDPTQRTAWLAEGLLMYLPAEAQDRLFTLIGELSPAGSRVAAETAPNHADERRQQMRERFKKVADEIGFEQTVDVGELMYRDDHRADVTEWLNAHGWRATAEHSTAAMRRLGRWIENVPLADDKDAFSDFVVAERR.

S-adenosyl-L-methionine-binding positions include Asp135 and Asp164–Leu165.

The protein belongs to the UPF0677 family.

In terms of biological role, exhibits S-adenosyl-L-methionine-dependent methyltransferase activity. This chain is Putative S-adenosyl-L-methionine-dependent methyltransferase MAV_5149, found in Mycobacterium avium (strain 104).